The sequence spans 369 residues: MDPCKVNELRAFVKMCKQDPSVLHTEEMRFLREWVESMGGKVPPATQKAKSEENTKEEKPDSKKVEEDLKADEPSTEESDLEIDKEGVIEPDTDAPQEMGDENVEITEEMMDQANDKKVAAIEVLNDGELQKAIDLFTDAIKLNPRLAILYAKRASVFVKLQKPNAAIQDCDRAIEINPDSAQPYKWRGKAHRLLGHWEEAAHDLAFACKLDYDEDASAMLKEVQPRAQKIAEHWRKYERKHEEREIKERIERVKKAQEEQERAQREEEARRQSGAHYGPFPGGFPGGMPGNFPGGMPGMGGDMPGMAGMPGLNEILSDPEALAAMQDPEVMVAFQDVAQNPANMSKYQSNPKVMNLISKLSAKFGGQA.

Positions Met-38–Glu-98 are disordered. Basic and acidic residues predominate over residues Ala-49–Glu-73. Acidic residues predominate over residues Ile-89 to Glu-98. TPR repeat units follow at residues Ala-114–Leu-147, Ile-149–Ser-181, and Gln-183–Glu-215. The span at Lys-256–Arg-272 shows a compositional bias: basic and acidic residues. The disordered stretch occupies residues Lys-256–Met-300. Gly residues predominate over residues Phe-281–Met-300. The STI1 domain maps to Asp-319–Ile-358. Ser-346 is modified (phosphoserine). 2 positions are modified to N6-acetyllysine: Lys-353 and Lys-360.

Belongs to the FAM10 family.

Its subcellular location is the cytoplasm. This Homo sapiens (Human) protein is Putative protein FAM10A5 (ST13P5).